The sequence spans 1193 residues: Pyruvate carboxylase (1193 aa).

Residues 41-493 (QFQKILVANR…WTTFIDDTPE (453 aa)) form the Biotin carboxylation domain. ATP contacts are provided by Lys159, Glu243, and His278. Residues 163–360 (RQLAIRCNVP…IVAAQIQIAA (198 aa)) enclose the ATP-grasp domain. The active site involves Arg335. Residues 579–847 (CLIMDTTWRD…DPGLNSAHVR (269 aa)) form the Pyruvate carboxyltransferase domain. Substrate-binding positions include 587 to 591 (RDAHQ) and Arg660. Asp588 contributes to the a divalent metal cation binding site. 3 residues coordinate a divalent metal cation: Lys756, His786, and His788. Residue Lys756 is modified to N6-carboxylysine. Residue Thr921 participates in substrate binding. The region spanning 1116 to 1191 (KADVGDSSQV…DGQDLVCKIT (76 aa)) is the Biotinyl-binding domain. At Lys1157 the chain carries N6-biotinyllysine.

The cofactor is biotin. It depends on Zn(2+) as a cofactor.

The protein resides in the cytoplasm. The catalysed reaction is hydrogencarbonate + pyruvate + ATP = oxaloacetate + ADP + phosphate + H(+). It participates in carbohydrate biosynthesis; gluconeogenesis. Pyruvate carboxylase catalyzes a 2-step reaction, involving the ATP-dependent carboxylation of the covalently attached biotin in the first step and the transfer of the carboxyl group to pyruvate in the second. This chain is Pyruvate carboxylase (pyc), found in Aspergillus terreus.